The primary structure comprises 159 residues: 2-C-methyl-D-erythritol 2,4-cyclodiphosphate synthase (159 aa).

The a divalent metal cation site is built by aspartate 11 and histidine 13. 4-CDP-2-C-methyl-D-erythritol 2-phosphate is bound by residues 11 to 13 (DVH) and 37 to 38 (HS). Histidine 45 contributes to the a divalent metal cation binding site. Residues 59–61 (DIG) and 64–68 (FPDSD) contribute to the 4-CDP-2-C-methyl-D-erythritol 2-phosphate site.

It belongs to the IspF family. In terms of assembly, homotrimer. Requires a divalent metal cation as cofactor.

The enzyme catalyses 4-CDP-2-C-methyl-D-erythritol 2-phosphate = 2-C-methyl-D-erythritol 2,4-cyclic diphosphate + CMP. It participates in isoprenoid biosynthesis; isopentenyl diphosphate biosynthesis via DXP pathway; isopentenyl diphosphate from 1-deoxy-D-xylulose 5-phosphate: step 4/6. Involved in the biosynthesis of isopentenyl diphosphate (IPP) and dimethylallyl diphosphate (DMAPP), two major building blocks of isoprenoid compounds. Catalyzes the conversion of 4-diphosphocytidyl-2-C-methyl-D-erythritol 2-phosphate (CDP-ME2P) to 2-C-methyl-D-erythritol 2,4-cyclodiphosphate (ME-CPP) with a corresponding release of cytidine 5-monophosphate (CMP). The sequence is that of 2-C-methyl-D-erythritol 2,4-cyclodiphosphate synthase from Solibacter usitatus (strain Ellin6076).